Consider the following 379-residue polypeptide: Alanine racemase (379 aa).

Lys-37 acts as the Proton acceptor; specific for D-alanine in catalysis. Lys-37 is subject to N6-(pyridoxal phosphate)lysine. Arg-139 provides a ligand contact to substrate. Tyr-266 (proton acceptor; specific for L-alanine) is an active-site residue. Met-314 is a substrate binding site.

This sequence belongs to the alanine racemase family. Pyridoxal 5'-phosphate is required as a cofactor.

The catalysed reaction is L-alanine = D-alanine. The protein operates within amino-acid biosynthesis; D-alanine biosynthesis; D-alanine from L-alanine: step 1/1. Its function is as follows. Catalyzes the interconversion of L-alanine and D-alanine. May also act on other amino acids. This Sorangium cellulosum (strain So ce56) (Polyangium cellulosum (strain So ce56)) protein is Alanine racemase (alr).